The following is a 130-amino-acid chain: Small ribosomal subunit protein uS9 (130 aa).

It belongs to the universal ribosomal protein uS9 family.

In Bacillus mycoides (strain KBAB4) (Bacillus weihenstephanensis), this protein is Small ribosomal subunit protein uS9.